Reading from the N-terminus, the 644-residue chain is Arginine--tRNA ligase (644 aa).

Residues 134-144 (VNPTKPLHMGH) carry the 'HIGH' region motif.

The protein belongs to the class-I aminoacyl-tRNA synthetase family.

The protein localises to the cytoplasm. It catalyses the reaction tRNA(Arg) + L-arginine + ATP = L-arginyl-tRNA(Arg) + AMP + diphosphate. The polypeptide is Arginine--tRNA ligase (Thermococcus sibiricus (strain DSM 12597 / MM 739)).